A 152-amino-acid chain; its full sequence is TRAPP-associated protein TCA17 (152 aa).

The protein belongs to the TRAPP small subunits family. Sedlin subfamily. As to quaternary structure, interacts with the TRAPP II complex; TRAPP II subunits TRS33 and TRS65 are required for this interaction.

It is found in the golgi apparatus. It localises to the trans-Golgi network. In terms of biological role, required, together with the TRAPP II subunit TRS33, for TRAPP II complex assembly or stability, and for proper Golgi localization of TRAPP and the Rab GTPase YPT31. In Saccharomyces cerevisiae (strain ATCC 204508 / S288c) (Baker's yeast), this protein is TRAPP-associated protein TCA17 (TCA17).